The following is a 195-amino-acid chain: GTP-dependent dephospho-CoA kinase (195 aa).

The GTP site is built by D49, V50, D68, E127, and D150.

This sequence belongs to the GTP-dependent DPCK family.

It carries out the reaction 3'-dephospho-CoA + GTP = GDP + CoA + H(+). It participates in cofactor biosynthesis; coenzyme A biosynthesis. In terms of biological role, catalyzes the GTP-dependent phosphorylation of the 3'-hydroxyl group of dephosphocoenzyme A to form coenzyme A (CoA). The polypeptide is GTP-dependent dephospho-CoA kinase (Methanosarcina barkeri (strain Fusaro / DSM 804)).